We begin with the raw amino-acid sequence, 720 residues long: DNA replication licensing factor mcm7-A (720 aa).

Residues 183-210 form a C4-type zinc finger; sequence CDQCGAETYQPIQSPTFMPLIMCPSREC. Positions 331 to 537 constitute an MCM domain; the sequence is FYEKLAASIA…NDLRLAQHIT (207 aa). ATP is bound by residues Tyr-344, Gly-383, Ala-385, Lys-386, Ser-387, Asn-488, Arg-513, and Arg-603. The Arginine finger signature appears at 512-515; sequence SRFD.

This sequence belongs to the MCM family. As to quaternary structure, component of the mcm2-7 complex (RLF-M). The complex forms a toroidal hexameric ring with the proposed subunit order mcm2-mcm6-mcm4-mcm7-mcm3-mcm5. The heterodimer of mmcm3/mcm5 interacts with mcm4, mmcm6, mcm7 and weakly with mcm2. The N-terminus is required for interaction with mmcm3, though this interaction may not be direct, and remains in a complex with mmcm3 throughout the cell cycle. Begins to associate with zmcm6 at the neurula stage. Component of the replisome complex. Component of the CMG helicase complex, composed of the mcm2-7 complex, the GINS complex and cdc45. In terms of processing, ubiquitinated by traip when forks converge following formation of DNA interstrand cross-links. Ubiquitinated via 'Lys-6'- and 'Lys-63'-linked polyubiquitination by traip. Short ubiquitin chains on mcm7 promote recruitment of DNA glycosylase neil3. If the interstrand cross-link cannot be cleaved by neil3, the ubiquitin chains continue to grow on mcm7, promoting the unloading of the CMG helicase complex by the vcp/p97 ATPase.

It localises to the nucleus. The protein resides in the chromosome. It carries out the reaction ATP + H2O = ADP + phosphate + H(+). Functionally, acts as a component of the mcm2-7 complex (mcm complex) which is the putative replicative helicase essential for 'once per cell cycle' DNA replication initiation and elongation in eukaryotic cells. The active ATPase sites in the mcm2-7 ring are formed through the interaction surfaces of two neighboring subunits such that a critical structure of a conserved arginine finger motif is provided in trans relative to the ATP-binding site of the Walker A box of the adjacent subunit. The six ATPase active sites, however, are likely to contribute differentially to the complex helicase activity. The existence of maternal and zygotic forms of mcm3 and mcm6 suggests that specific forms of mcm2-7 complexes may be used during different stages of development. The protein is DNA replication licensing factor mcm7-A (mcm7-a) of Xenopus laevis (African clawed frog).